A 232-amino-acid chain; its full sequence is MGRELQKRKKRSSRAKVQTHTIKKKVLNPQGSGIVAKAWNKKETLSQNYSRFGLVAKLGTAAGGMAKKSAAANYAGITKDDPLAVKSADRGLFEVREVKVERDASGKIVKVLRSDNPLNDPLNEIESDSESEEPKPKNPTHDIEWHGISDDRQEMIAQSSRPEVVRMLEEEASRPVEKTVRYQSERELEWLQRLVAKHGDDVAAMVRDIKLNPMQQTKGDITKRLRKAGLLQ.

The span at Met-1–Arg-14 shows a compositional bias: basic residues. 2 disordered regions span residues Met-1–His-20 and Arg-113–Arg-161. The span at Glu-132–Glu-154 shows a compositional bias: basic and acidic residues.

The protein belongs to the NOP16 family. Component of the pre-66S ribosomal particle.

The protein localises to the nucleus. It is found in the nucleolus. Functionally, involved in the biogenesis of the 60S ribosomal subunit. The protein is Nucleolar protein 16 (nop-16) of Neurospora crassa (strain ATCC 24698 / 74-OR23-1A / CBS 708.71 / DSM 1257 / FGSC 987).